The sequence spans 364 residues: 2-oxoadipate dioxygenase/decarboxylase, chloroplastic/amyloplastic (364 aa).

A chloroplast-targeting transit peptide spans 1 to 49; it reads MAVALAGARSPGAGAILSLRRLAPAAAAPVRLGGSGTPGTRRRRGIAMA. H107 and R111 together coordinate 2-oxoadipate. Position 107 (H107) interacts with Fe(2+). H243 is a binding site for Fe(2+). Q289 and Y313 together coordinate 2-oxoadipate. E315 is a binding site for Fe(2+).

The protein belongs to the 2-oxoadipate dioxygenase/decarboxylase family. Requires Fe(2+) as cofactor. In terms of tissue distribution, expressed in roots, stems, leaf sheaths, leaf blades, panicles, and endosperm.

The protein localises to the plastid. It localises to the chloroplast. It is found in the amyloplast. The catalysed reaction is 2-oxoadipate + O2 = (R)-2-hydroxyglutarate + CO2. Its pathway is amino-acid degradation. In terms of biological role, catalyzes the decarboxylation and hydroxylation of 2-oxoadipate (2OA) to form D-2-hydroxyglutarate (D-2-HGA). Is involved in a D-lysine catabolic pathway. Involved in the regulation of starch synthesis and amyloplast development within the peripheral endosperm during the grain-filling stage. The protein is 2-oxoadipate dioxygenase/decarboxylase, chloroplastic/amyloplastic of Oryza sativa subsp. japonica (Rice).